Consider the following 468-residue polypeptide: Sulfate adenylyltransferase subunit 1 (468 aa).

Residues 22 to 239 (KELLRFLTCG…TVEIASDKNA (218 aa)) form the tr-type G domain. The interval 31–38 (GSVDDGKS) is G1. A GTP-binding site is contributed by 31–38 (GSVDDGKS). The segment at 89 to 93 (GITID) is G2. The G3 stretch occupies residues 110 to 113 (DTPG). GTP contacts are provided by residues 110-114 (DTPGH) and 165-168 (NKMD). A G4 region spans residues 165 to 168 (NKMD). The segment at 202–204 (SAL) is G5.

It belongs to the TRAFAC class translation factor GTPase superfamily. Classic translation factor GTPase family. CysN/NodQ subfamily. Heterodimer composed of CysD, the smaller subunit, and CysN.

The catalysed reaction is sulfate + ATP + H(+) = adenosine 5'-phosphosulfate + diphosphate. It participates in sulfur metabolism; hydrogen sulfide biosynthesis; sulfite from sulfate: step 1/3. With CysD forms the ATP sulfurylase (ATPS) that catalyzes the adenylation of sulfate producing adenosine 5'-phosphosulfate (APS) and diphosphate, the first enzymatic step in sulfur assimilation pathway. APS synthesis involves the formation of a high-energy phosphoric-sulfuric acid anhydride bond driven by GTP hydrolysis by CysN coupled to ATP hydrolysis by CysD. The protein is Sulfate adenylyltransferase subunit 1 of Teredinibacter turnerae (strain ATCC 39867 / T7901).